A 445-amino-acid chain; its full sequence is Cyclic GMP-AMP phosphodiesterase SMPDL3A (445 aa).

Positions Met-1 to Gly-22 are cleaved as a signal peptide. Zn(2+) contacts are provided by Asp-42 and His-44. Cys-59 and Cys-78 form a disulfide bridge. Residue Asn-66 is glycosylated (N-linked (GlcNAc...) asparagine). Residue Asp-107 coordinates Zn(2+). His-111 contacts ATP. The N-linked (GlcNAc...) asparagine glycan is linked to Asn-128. Residue Asn-148 coordinates Zn(2+). Residues Asn-148 and His-149 each contribute to the ATP site. Asn-219 and Asn-235 each carry an N-linked (GlcNAc...) asparagine glycan. His-249 is a Zn(2+) binding site. Residue Tyr-257 participates in ATP binding. Positions 290 and 292 each coordinate Zn(2+). 2 N-linked (GlcNAc...) asparagine glycosylation sites follow: Asn-353 and Asn-364. Intrachain disulfides connect Cys-417–Cys-421 and Cys-427–Cys-440.

This sequence belongs to the acid sphingomyelinase family. In terms of assembly, monomer. Homodimer; homodimerizes following 2',3'-cGAMP-binding. Zn(2+) is required as a cofactor. In terms of processing, N-glycosylated. As to expression, detected in blood serum (at protein level).

The protein resides in the secreted. It catalyses the reaction 2',3'-cGAMP + H2O = 5'-pGpA(2'-5') + H(+). The catalysed reaction is 5'-pGpA(2'-5') + H2O = 5'-GpA(2'-5') + phosphate. The enzyme catalyses a ribonucleoside 5'-triphosphate + H2O = a ribonucleoside 5'-diphosphate + phosphate + H(+). It carries out the reaction ATP + H2O = ADP + phosphate + H(+). With respect to regulation, requires micromolar levels of Zn(2+) for activity. Inhibited by millimolar levels of Zn(2+). In terms of biological role, cyclic-nucleotide phosphodiesterase that acts as a negative regulator of innate immunity by mediating degradation of 2',3'-cGAMP, thereby inhibiting the cGAS-STING signaling. Specifically linearizes 2',3'-cGAMP into 2'5'-bond pGpA and further hydrolyzes pGpA to produce GpA. Also has in vitro nucleotide phosphodiesterase activity with nucleoside triphosphates, such as ATP. Has in vitro activity with p-nitrophenyl-TMP. Has lower activity with nucleoside diphosphates, and no activity with nucleoside monophosphates. Has in vitro activity with CDP-choline, giving rise to CMP and phosphocholine. Has in vitro activity with CDP-ethanolamine. Does not have sphingomyelin phosphodiesterase activity. In Mus musculus (Mouse), this protein is Cyclic GMP-AMP phosphodiesterase SMPDL3A.